The sequence spans 1091 residues: MAGPGSPRRASRGASALLAAALLYAALGDVVRSEQQIPLSVVKLWASAFGGEIKSIAAKYSGSQLLQKKYKEYEKDVAIEEIDGLQLVKKLAKNMEEMFHKKSEAVRRLVEAAEEAHLKHEFDADLQYEYFNAVLINERDKDGNFLELGKEFILAPNDHFNNLPVNISLSDVQVPTNMYNKDPAIVNGVYWSESLNKVFVDNFDRDPSLIWQYFGSAKGFFRQYPGIKWEPDENGVIAFDCRNRKWYIQAATSPKDVVILVDVSGSMKGLRLTIAKQTVSSILDTLGDDDFFNIIAYNEELHYVEPCLNGTLVQADRTNKEHFREHLDKLFAKGIGMLDIALNEAFNILSDFNHTGQGSICSQAIMLITDGAVDTYDTIFAKYNWPDRKVRIFTYLIGREAAFADNLKWMACANKGFFTQISTLADVQENVMEYLHVLSRPKVIDQEHDVVWTEAYIDSTLPQAQKLTDDQGPVLMTTVAMPVFSKQNETRSKGILLGVVGTDVPVKELLKTIPKYKLGIHGYAFAITNNGYILTHPELRLLYEEGKKRRKPNYSSVDLSEVEWEDRDDVLRNAMVNRKTGKFSMEVKKTVDKGKRVLVMTNDYYYTDIKGTPFSLGVALSRGHGKYFFRGNVTIEEGLHDLEHPDVSLADEWSYCNTDLHPEHRHLSQLEAIKLYLKGKEPLLQCDKELIQEVLFDAVVSAPIEAYWTSLALNKSENSDKGVEVAFLGTRTGLSRINLFVGAEQLTNQDFLKAGDKENIFNADHFPLWYRRAAEQIPGSFVYSIPFSTGPVNKSNVVTASTSIQLLDERKSPVVAAVGIQMKLEFFQRKFWTASRQCASLDGKCSISCDDETVNCYLIDNNGFILVSEDYTQTGDFFGEIEGAVMNKLLTMGSFKRITLYDYQAMCRANKESSDGAHGLLDPYNAFLSAVKWIMTELVLFLVEFNLCSWWHSDMTAKAQKLKQTLEPCDTEYPAFVSERTIKETTGNIACEDCSKSFVIQQIPSSNLFMVVVDSSCLCESVAPITMAPIEIRYNESLKCERLKAQKIRRRPESCHGFHPEENARECGGAPSLQAQTVLLLLPLLLMLFSR.

The first 28 residues, 1–28 (MAGPGSPRRASRGASALLAAALLYAALG), serve as a signal peptide directing secretion. At 29-1068 (DVVRSEQQIP…HPEENARECG (1040 aa)) the chain is on the extracellular side. A glycan (N-linked (GlcNAc...) asparagine) is linked at Asn166. Residues 256–438 (DVVILVDVSG…ENVMEYLHVL (183 aa)) enclose the VWFA domain. Residues Asp262, Ser264, and Ser266 each coordinate a divalent metal cation. The short motif at 262-266 (DVSGS) is the MIDAS-like motif element. A glycan (N-linked (GlcNAc...) asparagine) is linked at Asn309. A disulfide bridge connects residues Cys412 and Cys1055. The Cache domain maps to 452-549 (WTEAYIDSTL…RLLYEEGKKR (98 aa)). Asn553, Asn632, and Asn793 each carry an N-linked (GlcNAc...) asparagine glycan. Tyr924 bears the Phosphotyrosine mark. Residues 1069-1089 (GAPSLQAQTVLLLLPLLLMLF) traverse the membrane as a helical segment. Topologically, residues 1090-1091 (SR) are cytoplasmic.

Belongs to the calcium channel subunit alpha-2/delta family. Dimer formed of alpha-2-2 and delta-2 chains; disulfide-linked. Voltage-dependent calcium channels are multisubunit complexes, consisting of alpha-1 (CACNA1), alpha-2 (CACNA2D), beta (CACNB) and delta (CACNA2D) subunits in a 1:1:1:1 ratio. Post-translationally, N-glycosylated. In terms of processing, may be proteolytically processed into subunits alpha-2-3 and delta-3 that are disulfide-linked. It is however unclear whether such cleavage really takes place in vivo and has a functional role. In terms of tissue distribution, only detected in brain. Not present in lung, testis, aorta, spleen, jejunum, ventricular muscle and kidney (at protein level). According to PubMed:11687876, it is brain-specific, while according to PubMed:11245980, it is widely expressed.

It is found in the membrane. Its function is as follows. The alpha-2/delta subunit of voltage-dependent calcium channels regulates calcium current density and activation/inactivation kinetics of the calcium channel. Acts as a regulatory subunit for P/Q-type calcium channel (CACNA1A), N-type (CACNA1B), L-type (CACNA1C OR CACNA1D) but not T-type (CACNA1G). The protein is Voltage-dependent calcium channel subunit alpha-2/delta-3 (CACNA2D3) of Homo sapiens (Human).